Consider the following 298-residue polypeptide: GTP cyclohydrolase FolE2 (298 aa).

It belongs to the GTP cyclohydrolase IV family.

The catalysed reaction is GTP + H2O = 7,8-dihydroneopterin 3'-triphosphate + formate + H(+). Its pathway is cofactor biosynthesis; 7,8-dihydroneopterin triphosphate biosynthesis; 7,8-dihydroneopterin triphosphate from GTP: step 1/1. In terms of biological role, converts GTP to 7,8-dihydroneopterin triphosphate. This is GTP cyclohydrolase FolE2 from Pseudomonas fluorescens (strain SBW25).